A 208-amino-acid chain; its full sequence is Thiamine-phosphate synthase (208 aa).

4-amino-2-methyl-5-(diphosphooxymethyl)pyrimidine is bound by residues 38-42 and Asn70; that span reads QYRSK. The Mg(2+) site is built by Asp71 and Asp90. Thr109 contacts 4-amino-2-methyl-5-(diphosphooxymethyl)pyrimidine. Position 136–138 (136–138) interacts with 2-[(2R,5Z)-2-carboxy-4-methylthiazol-5(2H)-ylidene]ethyl phosphate; sequence SAT. Lys139 provides a ligand contact to 4-amino-2-methyl-5-(diphosphooxymethyl)pyrimidine. 2-[(2R,5Z)-2-carboxy-4-methylthiazol-5(2H)-ylidene]ethyl phosphate is bound by residues Gly166 and 186 to 187; that span reads VS.

Belongs to the thiamine-phosphate synthase family. Mg(2+) serves as cofactor.

The enzyme catalyses 2-[(2R,5Z)-2-carboxy-4-methylthiazol-5(2H)-ylidene]ethyl phosphate + 4-amino-2-methyl-5-(diphosphooxymethyl)pyrimidine + 2 H(+) = thiamine phosphate + CO2 + diphosphate. The catalysed reaction is 2-(2-carboxy-4-methylthiazol-5-yl)ethyl phosphate + 4-amino-2-methyl-5-(diphosphooxymethyl)pyrimidine + 2 H(+) = thiamine phosphate + CO2 + diphosphate. It carries out the reaction 4-methyl-5-(2-phosphooxyethyl)-thiazole + 4-amino-2-methyl-5-(diphosphooxymethyl)pyrimidine + H(+) = thiamine phosphate + diphosphate. It functions in the pathway cofactor biosynthesis; thiamine diphosphate biosynthesis; thiamine phosphate from 4-amino-2-methyl-5-diphosphomethylpyrimidine and 4-methyl-5-(2-phosphoethyl)-thiazole: step 1/1. In terms of biological role, condenses 4-methyl-5-(beta-hydroxyethyl)thiazole monophosphate (THZ-P) and 2-methyl-4-amino-5-hydroxymethyl pyrimidine pyrophosphate (HMP-PP) to form thiamine monophosphate (TMP). The polypeptide is Thiamine-phosphate synthase (Aromatoleum aromaticum (strain DSM 19018 / LMG 30748 / EbN1) (Azoarcus sp. (strain EbN1))).